We begin with the raw amino-acid sequence, 280 residues long: Large ribosomal subunit protein uL2 (280 aa).

Disordered stretches follow at residues 1-59 and 223-280; these read MAIR…GGHK and GVVM…NKKR. Residues 23–33 are compositionally biased toward basic and acidic residues; that stretch reads ELTRSTPEKSL. 2 stretches are compositionally biased toward basic residues: residues 36–59 and 269–280; these read PLHK…GGHK and VRRRRSNKNKKR.

Belongs to the universal ribosomal protein uL2 family. Part of the 50S ribosomal subunit. Forms a bridge to the 30S subunit in the 70S ribosome.

In terms of biological role, one of the primary rRNA binding proteins. Required for association of the 30S and 50S subunits to form the 70S ribosome, for tRNA binding and peptide bond formation. It has been suggested to have peptidyltransferase activity; this is somewhat controversial. Makes several contacts with the 16S rRNA in the 70S ribosome. The polypeptide is Large ribosomal subunit protein uL2 (Corynebacterium kroppenstedtii (strain DSM 44385 / JCM 11950 / CIP 105744 / CCUG 35717)).